Consider the following 85-residue polypeptide: MKGTFLICLILIAGFYFRSIQGFYFKRIQGNICSEPKKVGRCRGSFPRFYFDSETGKCTPFIYGGCGGNGNNFETLHACRAICRA.

The N-terminal stretch at Met-1–Gly-22 is a signal peptide. The propeptide occupies Phe-23–Gln-29. The BPTI/Kunitz inhibitor domain occupies Cys-33 to Cys-83. 3 disulfide bridges follow: Cys-33/Cys-83, Cys-42/Cys-66, and Cys-58/Cys-79.

It belongs to the venom Kunitz-type family. Sea anemone type 2 potassium channel toxin subfamily.

It localises to the secreted. It is found in the nematocyst. Serine protease inhibitor that also shows protective effect in a cytotoxicity model. It binds to all proteases tested (trypsin (Ki=52 nM), alpha-chymotrypsin, cathepsin G, kallikrein, and human neutrophil elastase). It significantly increases neuroblastoma cell viability in an in vitro neurotoxicity model, being a consequence of an effective decrease of reactive oxygen species (ROS) level in the cells. It also seems to protect cells by inhibiting ATP-induced purinoceptor (P2RX7) activation. In Radianthus crispa (Leathery sea anemone), this protein is PI-stichotoxin-Hcr2i.